A 154-amino-acid polypeptide reads, in one-letter code: Ribosome maturation factor RimP (154 aa).

The protein belongs to the RimP family.

It localises to the cytoplasm. Required for maturation of 30S ribosomal subunits. This chain is Ribosome maturation factor RimP, found in Alkaliphilus oremlandii (strain OhILAs) (Clostridium oremlandii (strain OhILAs)).